The primary structure comprises 132 residues: MSGLKNSGKKAVDAILNPQKIDVAFQKFTRPTVAAGKTTFPTSQRDLKNIGFHFDLADHTRQVPDTRPNAKPGATRTANVFHWQAAAEAESKSIKDWIRKNGSHAVIQTLEVPVDATKEEFEDILKTAAKKL.

Part of the subtelomeric hrmA-associated cluster (HAC) containing genes that alter the hyphal surface (such as reduced total chitin or increased beta-glucan exposure) and perturb inter-hyphal interactions within the developing biofilms, resulting in a loss of vertically aligned polarized growing filaments. Consequently, this hypoxia-typic morphotype (called H-MORPH) with altered biofilm architecture leads to increased hypoxia fitness, increased host inflammation, rapid disease progression, and mortality in a murine model of invasive aspergillosis. The protein is Subtelomeric hrmA-associated cluster protein AFUB_079000 of Aspergillus fumigatus (strain CBS 144.89 / FGSC A1163 / CEA10) (Neosartorya fumigata).